The following is a 378-amino-acid chain: Acetylornithine deacetylase (378 aa).

Zn(2+) is bound at residue His76. Residue Asp78 is part of the active site. Asp108 contacts Zn(2+). Glu140 is an active-site residue. Residues Glu141, Glu165, and His351 each contribute to the Zn(2+) site.

Belongs to the peptidase M20A family. ArgE subfamily. Homodimer. Zn(2+) is required as a cofactor. Co(2+) serves as cofactor. The cofactor is glutathione.

The protein resides in the cytoplasm. It carries out the reaction N(2)-acetyl-L-ornithine + H2O = L-ornithine + acetate. It participates in amino-acid biosynthesis; L-arginine biosynthesis; L-ornithine from N(2)-acetyl-L-ornithine (linear): step 1/1. In terms of biological role, catalyzes the hydrolysis of the amide bond of N(2)-acetylated L-amino acids. Cleaves the acetyl group from N-acetyl-L-ornithine to form L-ornithine, an intermediate in L-arginine biosynthesis pathway, and a branchpoint in the synthesis of polyamines. This Vibrio cholerae serotype O1 (strain ATCC 39541 / Classical Ogawa 395 / O395) protein is Acetylornithine deacetylase.